The sequence spans 146 residues: Ribonuclease H (146 aa).

The RNase H type-1 domain maps to 4–145 (ELNKVVIYTD…ADILARSQIS (142 aa)). Residues Asp13, Glu51, Asp73, and Asp137 each contribute to the Mg(2+) site.

It belongs to the RNase H family. Monomer. It depends on Mg(2+) as a cofactor.

Its subcellular location is the cytoplasm. It carries out the reaction Endonucleolytic cleavage to 5'-phosphomonoester.. Its function is as follows. Endonuclease that specifically degrades the RNA of RNA-DNA hybrids. This chain is Ribonuclease H, found in Ehrlichia canis (strain Jake).